We begin with the raw amino-acid sequence, 759 residues long: MADEGPRKGSVSALMGRTNGLTKPAALAGGPAKPGGTGGSRKLVIKNFRDRPRLPDNYTQDTWRKLHEAVKAIQSSTSIRYNLEELYQAVENLCSHKVSPTLYKQLRQVCEDHVQAQILPFREDSLDSVLFLKKINTCWQDHCRQMIMIRSIFLFLDRTYVLQNSMLPSIWDMGLELFRNHIISDRMVQSKTIDGILLLIGRERSGEAVDRSLLRSLLSMLSDLQVYKDSFELKFLEETNCLYAAEGQRLMQDREVPEYLNHVSKRLEEEADRVITYLDHSTQKPLIACVEKQLLGEHLTAILQKGLEHLLDENRVPDLTQMYQLFSRVKGGQHALLQHWSEYIKTFGTTIVINPEKDKDMVQDLLDFKDKVDHVVEVCFQRNERFINLMKESFETFINKRPNKPAELIAKHVDSKLRAGNKEATDEELERILDKIMILFRFIHGKDVFEAFYKKDLAKRLLVGKSASVDAEKSMLSKLKHECGAAFTSKLEGMFKDMELSKDIMVHFKQHMQNQSAPGPIDLTVNILTMGYWPTYTPMEVHLPPEMVRLQEVFKTFYLGKHSGRKLQWQTTLGHAVLKADFKEGKKEFQVSLFQTLVLLMFNEGDGFSFEEIKMATGIEDSELRRTLQSLACGKARVLIKSPKGKEVEDGDKFIFNADFKHKLFRIKINQIQMKETVEEQVSTTERVFQDRQYQIDAAIVRIMKMRKTLGHNLLVSELYNQLKFPVKPGDLKKRIESLIDRDYMERDKDSPNQYHYVA.

The disordered stretch occupies residues 1 to 40; the sequence is MADEGPRKGSVSALMGRTNGLTKPAALAGGPAKPGGTGGS. A Glycyl lysine isopeptide (Lys-Gly) (interchain with G-Cter in SUMO2) cross-link involves residue K8. At S10 the chain carries Phosphoserine. The span at 20-31 shows a compositional bias: low complexity; that stretch reads GLTKPAALAGGP. K33 is covalently cross-linked (Glycyl lysine isopeptide (Lys-Gly) (interchain with G-Cter in ubiquitin)). The region spanning 691–750 is the Cullin neddylation domain; sequence DRQYQIDAAIVRIMKMRKTLGHNLLVSELYNQLKFPVKPGDLKKRIESLIDRDYMERDKD. K705 participates in a covalent cross-link: Glycyl lysine isopeptide (Lys-Gly) (interchain with G-Cter in NEDD8).

The protein belongs to the cullin family. In terms of assembly, can self-associate. Component of multiple DCX (DDB1-CUL4-X-box) E3 ubiquitin-protein ligase complexes that seem to consist of DDB1, CUL4A or CUL4B, RBX1 and a variable substrate recognition component which seems to belong to a protein family described as DCAF (Ddb1- and Cul4-associated factor) or CDW (CUL4-DDB1-associated WD40-repeat) proteins. Component of the CSA complex (DCX(ERCC8) complex) containing ERCC8, RBX1, DDB1 and CUL4A; the CSA complex interacts with RNA polymerase II; upon UV irradiation it interacts with the COP9 signalosome and preferentially with the hyperphosphorylated form of RNA polymerase II. Component of the DCX(DET1-COP1) complex with the substrate recognition component DET1 and COP1. Component of the DCX(DDB2) complex with the substrate recognition component DDB2. Component of the DCX(DTL) complex with the putative substrate recognition component DTL. Component of DCX complexes part of the DesCEND (destruction via C-end degrons) pathway, which contain either TRPC4AP or DCAF12 as substrate-recognition component. Component of the DCX(AMBRA1) complex with the substrate recognition component AMBRA1. Interacts with DDB1, RBX1, RNF7, CDT1, TIP120A/CAND1, SKP2, CDKN1B, MDM2, TP53 and HOXA9. Interacts with DDB2; the interactions with DDB2 and CAND1 are mutually exclusive. Interacts with DCAF1, DTL, DDA1, DCAF6, DCAF4, DCAF16, DCAF17, DET1, WDTC1, DCAF5, DCAF11, WDR24A, COP1, PAFAH1B1, ERCC8, GRWD1, FBXW5, RBBP7, GNB2, WSB1, WSB2, NUP43, PWP1, FBXW8, ATG16L1, KATNB1, RBBP4, RBBP5, LRWD1 and DCAF8. May interact with WDR26, WDR51B, SNRNP40, WDR61, WDR76, WDR5. Interacts (when neddylated) with ARIH1; leading to activate the E3 ligase activity of ARIH1. The DDB1-CUL4A complex interacts with CRY1. Interacts (unneddylated form) with DCUN1D1, DCUN1D2, DCUN1D3, DCUN1D4 and DCUN1D5; these interactions promote the cullin neddylation. As to quaternary structure, (Microbial infection) Interacts with murine cytomegalovirus M48. Neddylated; required for activity of cullin-RING-based E3 ubiquitin-protein ligase complexes. Deneddylated via its interaction with the COP9 signalosome (CSN) complex. Post-translationally, (Microbial infection) Deneddylated by murine cytomegalovirus M48 leading to a S-phase-like environment that is required for efficient replication of the viral genome. As to expression, expressed in oocytes (at protein level). In the ovary, also expressed in cumulus cells. Expressed in testis, spleen and kidney.

Its pathway is protein modification; protein ubiquitination. Core component of multiple cullin-RING-based E3 ubiquitin-protein ligase complexes which mediate the ubiquitination of target proteins. As a scaffold protein may contribute to catalysis through positioning of the substrate and the ubiquitin-conjugating enzyme. The E3 ubiquitin-protein ligase activity of the complex is dependent on the neddylation of the cullin subunit and is inhibited by the association of the deneddylated cullin subunit with TIP120A/CAND1. The functional specificity of the E3 ubiquitin-protein ligase complex depends on the variable substrate recognition component. DCX(DET1-COP1) directs ubiquitination of JUN. DCX(DDB2) directs ubiquitination of XPC. DCX(DDB2) ubiquitinates histones H3-H4 and is required for efficient histone deposition during replication-coupled (H3.1) and replication-independent (H3.3) nucleosome assembly, probably by facilitating the transfer of H3 from ASF1A/ASF1B to other chaperones involved in histone deposition. DCX(DTL) plays a role in PCNA-dependent polyubiquitination of CDT1 and MDM2-dependent ubiquitination of p53/TP53 in response to radiation-induced DNA damage and during DNA replication. DCX(DTL) directs autoubiquitination of DTL. In association with DDB1 and SKP2 probably is involved in ubiquitination of CDKN1B/p27kip. Is involved in ubiquitination of HOXA9. The DDB1-CUL4A-DTL E3 ligase complex regulates the circadian clock function by mediating the ubiquitination and degradation of CRY1. The DCX(ERCC8) complex (also named CSA complex) plays a role in transcription-coupled repair (TCR). A number of DCX complexes (containing either TRPC4AP or DCAF12 as substrate-recognition component) are part of the DesCEND (destruction via C-end degrons) pathway, which recognizes a C-degron located at the extreme C terminus of target proteins, leading to their ubiquitination and degradation. With CUL4B, contributes to ribosome biogenesis. The DCX(AMBRA1) complex is a master regulator of the transition from G1 to S cell phase by mediating ubiquitination of phosphorylated cyclin-D (CCND1, CCND2 and CCND3). The DCX(AMBRA1) complex also acts as a regulator of Cul5-RING (CRL5) E3 ubiquitin-protein ligase complexes by mediating ubiquitination and degradation of Elongin-C (ELOC) component of CRL5 complexes. This Mus musculus (Mouse) protein is Cullin-4A.